Consider the following 315-residue polypeptide: Glycine--tRNA ligase alpha subunit (315 aa).

The protein belongs to the class-II aminoacyl-tRNA synthetase family. As to quaternary structure, tetramer of two alpha and two beta subunits.

The protein resides in the cytoplasm. The catalysed reaction is tRNA(Gly) + glycine + ATP = glycyl-tRNA(Gly) + AMP + diphosphate. The chain is Glycine--tRNA ligase alpha subunit from Pseudomonas paraeruginosa (strain DSM 24068 / PA7) (Pseudomonas aeruginosa (strain PA7)).